Here is a 295-residue protein sequence, read N- to C-terminus: Pyridoxal 5'-phosphate synthase subunit PdxS (295 aa).

Asp-25 lines the D-ribose 5-phosphate pocket. Residue Lys-82 is the Schiff-base intermediate with D-ribose 5-phosphate of the active site. Residue Gly-154 participates in D-ribose 5-phosphate binding. A D-glyceraldehyde 3-phosphate-binding site is contributed by Arg-166. Residues Gly-215 and 236 to 237 (GS) each bind D-ribose 5-phosphate.

This sequence belongs to the PdxS/SNZ family. As to quaternary structure, in the presence of PdxT, forms a dodecamer of heterodimers.

The enzyme catalyses aldehydo-D-ribose 5-phosphate + D-glyceraldehyde 3-phosphate + L-glutamine = pyridoxal 5'-phosphate + L-glutamate + phosphate + 3 H2O + H(+). The protein operates within cofactor biosynthesis; pyridoxal 5'-phosphate biosynthesis. Catalyzes the formation of pyridoxal 5'-phosphate from ribose 5-phosphate (RBP), glyceraldehyde 3-phosphate (G3P) and ammonia. The ammonia is provided by the PdxT subunit. Can also use ribulose 5-phosphate and dihydroxyacetone phosphate as substrates, resulting from enzyme-catalyzed isomerization of RBP and G3P, respectively. The chain is Pyridoxal 5'-phosphate synthase subunit PdxS from Macrococcus caseolyticus (strain JCSC5402) (Macrococcoides caseolyticum).